A 270-amino-acid chain; its full sequence is Phosphatidylinositol transfer protein alpha isoform (270 aa).

Residues Thr58, Lys60, Glu85, Asn89, Thr96, and Lys194 each coordinate a 1,2-diacyl-sn-glycero-3-phospho-(1D-myo-inositol). Residue Lys215 is modified to N6-acetyllysine. The span at 250 to 263 (TKRQLDEMRQKDPV) shows a compositional bias: basic and acidic residues. Positions 250–270 (TKRQLDEMRQKDPVKGMTADD) are disordered.

The protein belongs to the PtdIns transfer protein family. PI transfer class I subfamily.

The protein localises to the cytoplasm. It localises to the nucleus. The catalysed reaction is a 1,2-diacyl-sn-glycero-3-phosphocholine(in) = a 1,2-diacyl-sn-glycero-3-phosphocholine(out). It catalyses the reaction a 1,2-diacyl-sn-glycero-3-phospho-(1D-myo-inositol)(in) = a 1,2-diacyl-sn-glycero-3-phospho-(1D-myo-inositol)(out). Phosphatidylinositol transfer activity is inhibited by N-ethylmaleimide. Functionally, catalyzes the transfer of phosphatidylinositol (PI) and phosphatidylcholine (PC) between membranes. Shows a preference for PI and PC containing shorter saturated or monosaturated acyl chains at the sn-1 and sn-2 positions. Preference order for PC is C16:1 &gt; C16:0 &gt; C18:1 &gt; C18:0 &gt; C20:4 and for PI is C16:1 &gt; C16:0 &gt; C18:1 &gt; C18:0 &gt; C20:4 &gt; C20:3. The sequence is that of Phosphatidylinositol transfer protein alpha isoform (PITPNA) from Homo sapiens (Human).